Here is a 352-residue protein sequence, read N- to C-terminus: Small ribosomal subunit biogenesis GTPase RsgA (352 aa).

Residues 1 to 11 (MTKRKLSKGQQ) show a composition bias toward basic residues. The tract at residues 1-35 (MTKRKLSKGQQRRVQENHKKRLQSKEKKNHVELDD) is disordered. Positions 13–33 (RVQENHKKRLQSKEKKNHVEL) are enriched in basic and acidic residues. Residues 114–276 (YYDGIKPIAA…VIDSPGVREF (163 aa)) enclose the CP-type G domain. GTP-binding positions include 162 to 165 (NKVD) and 216 to 224 (GQSGVGKSS). Positions 300, 305, 307, and 313 each coordinate Zn(2+).

It belongs to the TRAFAC class YlqF/YawG GTPase family. RsgA subfamily. As to quaternary structure, monomer. Associates with 30S ribosomal subunit, binds 16S rRNA. Zn(2+) serves as cofactor.

Its subcellular location is the cytoplasm. In terms of biological role, one of several proteins that assist in the late maturation steps of the functional core of the 30S ribosomal subunit. Helps release RbfA from mature subunits. May play a role in the assembly of ribosomal proteins into the subunit. Circularly permuted GTPase that catalyzes slow GTP hydrolysis, GTPase activity is stimulated by the 30S ribosomal subunit. This chain is Small ribosomal subunit biogenesis GTPase RsgA, found in Proteus mirabilis (strain HI4320).